The following is a 350-amino-acid chain: Protein-glutamate methylesterase/protein-glutamine glutaminase (350 aa).

In terms of domain architecture, Response regulatory spans arginine 5 to leucine 122. Position 56 is a 4-aspartylphosphate (aspartate 56). Positions leucine 153–glycine 345 constitute a CheB-type methylesterase domain. Active-site residues include serine 165, histidine 191, and aspartate 287.

Belongs to the CheB family. Phosphorylated by CheA. Phosphorylation of the N-terminal regulatory domain activates the methylesterase activity.

Its subcellular location is the cytoplasm. It carries out the reaction [protein]-L-glutamate 5-O-methyl ester + H2O = L-glutamyl-[protein] + methanol + H(+). It catalyses the reaction L-glutaminyl-[protein] + H2O = L-glutamyl-[protein] + NH4(+). Involved in chemotaxis. Part of a chemotaxis signal transduction system that modulates chemotaxis in response to various stimuli. Catalyzes the demethylation of specific methylglutamate residues introduced into the chemoreceptors (methyl-accepting chemotaxis proteins or MCP) by CheR. Also mediates the irreversible deamidation of specific glutamine residues to glutamic acid. Does not interact with the C-terminal pentapeptide of the chemoreceptors. The polypeptide is Protein-glutamate methylesterase/protein-glutamine glutaminase (Pectobacterium atrosepticum (strain SCRI 1043 / ATCC BAA-672) (Erwinia carotovora subsp. atroseptica)).